The primary structure comprises 342 residues: Pre-mRNA-splicing factor 18 (342 aa).

M1 carries the N-acetylmethionine modification.

Belongs to the PRP18 family. Heterodimer with PPIH. Interacts with PRPF4 and with the spliceosome. Part of a complex containing U4/U6 snRNPs.

It is found in the nucleus speckle. Its function is as follows. Participates in the second step of pre-mRNA splicing. The polypeptide is Pre-mRNA-splicing factor 18 (PRPF18) (Pongo abelii (Sumatran orangutan)).